Reading from the N-terminus, the 612-residue chain is Serine/threonine-protein kinase Nek1 (612 aa).

The Protein kinase domain occupies 4–258 (YEFLEQIGKG…ASDLLRHPHL (255 aa)). Residues 10 to 18 (IGKGSFGSA) and Lys-33 each bind ATP. Asp-129 (proton acceptor) is an active-site residue. The span at 503–513 (ISDGSSSSDQN) shows a compositional bias: polar residues. The tract at residues 503–534 (ISDGSSSSDQNATAGASSHTTSSSSRRCRFDP) is disordered. The segment covering 514–527 (ATAGASSHTTSSSS) has biased composition (low complexity).

Belongs to the protein kinase superfamily. NEK Ser/Thr protein kinase family. NIMA subfamily.

The catalysed reaction is L-seryl-[protein] + ATP = O-phospho-L-seryl-[protein] + ADP + H(+). It catalyses the reaction L-threonyl-[protein] + ATP = O-phospho-L-threonyl-[protein] + ADP + H(+). In terms of biological role, may be involved in plant development processes. The sequence is that of Serine/threonine-protein kinase Nek1 (NEK1) from Arabidopsis thaliana (Mouse-ear cress).